Here is a 522-residue protein sequence, read N- to C-terminus: Amine oxidase [flavin-containing] (522 aa).

Residues 1–492 lie on the Cytoplasmic side of the membrane; that stretch reads MTANAYDVIV…WERNLPSVGG (492 aa). At C398 the chain carries S-8alpha-FAD cysteine. Residues 493–513 traverse the membrane as a helical; Anchor for type IV membrane protein segment; it reads FLKFMGVSSFLAAATAAGLVA. Residues 514–522 lie on the Mitochondrial intermembrane side of the membrane; it reads CKKGLLPRC.

This sequence belongs to the flavin monoamine oxidase family. As to quaternary structure, monomer, homo- or heterodimer (containing two subunits of similar size). Each subunit contains a covalently bound flavin. Enzymatically active as monomer. Requires FAD as cofactor. As to expression, strongest expression in brain and intestine, followed by liver, heart and gill. Little expression in spleen, eye or muscle. In brain, highest activity in noradrenergic and serotonergic cell groups and those of the habenulointerpeduncular pathway; moderate levels in dopaminergic cell clusters.

Its subcellular location is the mitochondrion outer membrane. The enzyme catalyses a secondary aliphatic amine + O2 + H2O = a primary amine + an aldehyde + H2O2. The catalysed reaction is a primary methyl amine + O2 + H2O = an aldehyde + H2O2 + NH4(+). It carries out the reaction serotonin + O2 + H2O = (5-hydroxyindol-3-yl)acetaldehyde + H2O2 + NH4(+). It catalyses the reaction 2-phenylethylamine + O2 + H2O = 2-phenylacetaldehyde + H2O2 + NH4(+). The enzyme catalyses tyramine + O2 + H2O = (4-hydroxyphenyl)acetaldehyde + H2O2 + NH4(+). The catalysed reaction is dopamine + O2 + H2O = 3,4-dihydroxyphenylacetaldehyde + H2O2 + NH4(+). It carries out the reaction (R)-adrenaline + O2 + H2O = (R)-3,4-dihydroxymandelaldehyde + methylamine + H2O2. It catalyses the reaction (R)-noradrenaline + O2 + H2O = (R)-3,4-dihydroxymandelaldehyde + H2O2 + NH4(+). The enzyme catalyses kynuramine + O2 + H2O = 3-(2-aminophenyl)-3-oxopropanal + H2O2 + NH4(+). The catalysed reaction is tryptamine + O2 + H2O = indole-3-acetaldehyde + H2O2 + NH4(+). Inhibited by both clorgyline (selective MAOA inhibitor) and deprenyl (selective MAOB inhibitor). Functionally, catalyzes the oxidative deamination of biogenic and xenobiotic amines and has important functions in the metabolism of neuroactive and vasoactive amines in the central nervous system and peripheral tissues. Preferentially oxidizes serotonin and tyramine. Also catalyzes the oxidative deamination of kynuramine to 3-(2-aminophenyl)-3-oxopropanal that can spontaneously condense to 4-hydroxyquinoline. The chain is Amine oxidase [flavin-containing] from Danio rerio (Zebrafish).